Consider the following 315-residue polypeptide: Homoserine kinase (315 aa).

Position 97–107 (97–107 (PPARGLGSSAT)) interacts with ATP.

This sequence belongs to the GHMP kinase family. Homoserine kinase subfamily.

Its subcellular location is the cytoplasm. It catalyses the reaction L-homoserine + ATP = O-phospho-L-homoserine + ADP + H(+). The protein operates within amino-acid biosynthesis; L-threonine biosynthesis; L-threonine from L-aspartate: step 4/5. Its function is as follows. Catalyzes the ATP-dependent phosphorylation of L-homoserine to L-homoserine phosphate. This is Homoserine kinase from Synechococcus sp. (strain WH7803).